Consider the following 472-residue polypeptide: Aspartyl/glutamyl-tRNA(Asn/Gln) amidotransferase subunit B (472 aa).

The protein belongs to the GatB/GatE family. GatB subfamily. Heterotrimer of A, B and C subunits.

The catalysed reaction is L-glutamyl-tRNA(Gln) + L-glutamine + ATP + H2O = L-glutaminyl-tRNA(Gln) + L-glutamate + ADP + phosphate + H(+). It carries out the reaction L-aspartyl-tRNA(Asn) + L-glutamine + ATP + H2O = L-asparaginyl-tRNA(Asn) + L-glutamate + ADP + phosphate + 2 H(+). Its function is as follows. Allows the formation of correctly charged Asn-tRNA(Asn) or Gln-tRNA(Gln) through the transamidation of misacylated Asp-tRNA(Asn) or Glu-tRNA(Gln) in organisms which lack either or both of asparaginyl-tRNA or glutaminyl-tRNA synthetases. The reaction takes place in the presence of glutamine and ATP through an activated phospho-Asp-tRNA(Asn) or phospho-Glu-tRNA(Gln). In Campylobacter jejuni subsp. doylei (strain ATCC BAA-1458 / RM4099 / 269.97), this protein is Aspartyl/glutamyl-tRNA(Asn/Gln) amidotransferase subunit B.